The chain runs to 1357 residues: MSLNFLPGRPNATPQTACQATWQNHTIFAYCSGNNLIILTNKFTRLQTIYTQSDCTAVDINSQNGFIALSFHNRVLIYKPIHQIMQNPKWTQCCQLFHDDTPVNCLRWSSDNELAIGSDFLSFWKIKDNFGVYQPILQWNQKQPKPVYNVIISQDSQLIVSIGKYDCNAKLWKRVSIVGEQAIFNLTMLPHPKPITAMRWKKEPDQVSKNNTASHALYTLCEDKVLRIWSCFEMEKNHTVQIWGEVPLSPTQKFCVIIDNWIIRQTLSVKDSEIFDISDSDIVILGSMTGEMEVLALNNLSQDPPKPMTKKTISHKKVKKATMLNDTRYLYLPEIQPYDNVKGKLSFLVHDLQGVIRHLLIDILQLINNKTEDLSAALEHKFTGHNKSVQKLVRSSDGEALLTTSRFSENGVWYPQKLNHGVSLRLQNTIQTESPIKFAVVHELGKQVICLLENGALQAWECPTNRKEDSEQKQSYLRVETRLKEEKKIHPIVMLNTPEPKHSHERHFTALIFSDGSIKAFEVSLTRGIFEVKSDSLDIDGDDIYKISIIDPVHQTFVSNRPLISLITKKGLTRTYKAIVNYNDRHVQWIKACEINTGIMNCTCIRGSSTGKLCIVNSTGKVMSLWDLNRGVLEYEETFHNPIEDIDWTSTEYGQSIVSIGFTGYALLYTQLRYDYTNNTPSYLPIEKIDITAHTAHNIGDSVWMKNGTFVVASGNQFYIKDKSLDLTDPFTYQSIGSRKILSNDILHLSSVLNGPLPVYHPQFLIQAIYANKLQLVKELLLRLFLALRKLDFESQDVSNLDSNLGMDPLKYFIAKDRDYPVESFPDPYPCFNKTVSLALTEQLTKTTLPYLTRHQQITLITVIEAVDEVTKNENIVDYNGVRFLLGVKLFLSHKNIQKSILMRDVSWALHSDNKEILLSSIDRHITSWNRAREYRIAYWIKEQDLVKKFEDIAKYEFSKDDKRDPSRCAIFYLALKKKQILLSLWKMAIGHPEQQKMVRFISNDFTVPRWRTAALKNAFVLLSKHRYMDAAVFFLLTDSLKDCVNVLCKQVHDMDLAIGVCRVYEGDNGPVLGELLTAQMLPETIKENDRWKASFIYWKLRKQEVAIKALLTAPIDLENNSSIVDKEVCVNRSFLVEDPALLYLYNHLRNRNLKYFIGSLNVEAKIECTLILRVTDILCRMGCNYLAVSLVKNWKFIERNSIPVQKLLKSPTKDRAYSAIGAMASEPISTARMRPSLFDKFGSPSASDIESPNPKLPNSLLDDFLQPPPNSTSSNSLAQSSSSAPRSILDEFVSPSYSQHKENLTPKAPNDSVGETDNSENRKDKLSKDILDDLSSQKPQKPKKSAITKNLLDDFV.

8 WD repeats span residues 98-134 (HDDT…GVYQ), 142-182 (KQPK…GEQA), 190-239 (PHPK…KNHT), 384-423 (GHNK…HGVS), 431-470 (QTES…KEDS), 595-636 (INTG…LEYE), 638-679 (TFHN…YTNN), and 898-939 (QKSI…RIAY). The disordered stretch occupies residues 1243 to 1357 (GSPSASDIES…ITKNLLDDFV (115 aa)). Phosphoserine is present on residues S1244 and S1248. Low complexity predominate over residues 1272–1288 (STSSNSLAQSSSSAPRS). Over residues 1320–1332 (SENRKDKLSKDIL) the composition is skewed to basic and acidic residues.

As to quaternary structure, component of the RAVE complex composed of RAV1, RAV2 and CBF3D/SKP1. Within the complex, it interacts directly with RAV2 and CBF3D. Interacts with the V-ATPase V1 subunits VMA1, VMA2 and VMA8.

It is found in the endomembrane system. In terms of biological role, component of the RAVE complex, which is required for stable assembly of the vacuolar ATPase complex V-ATPase under many conditions. Required for transport between the early endosome and the late endosome/prevacuolar compartment (PVC), suggesting that assembly of vacuolar ATPase at the early endosome is required for transport from the early endosome to the PVC. In Saccharomyces cerevisiae (strain ATCC 204508 / S288c) (Baker's yeast), this protein is Regulator of V-ATPase in vacuolar membrane protein 1 (RAV1).